Reading from the N-terminus, the 212-residue chain is ATP phosphoribosyltransferase (212 aa).

This sequence belongs to the ATP phosphoribosyltransferase family. Short subfamily. Heteromultimer composed of HisG and HisZ subunits.

Its subcellular location is the cytoplasm. The catalysed reaction is 1-(5-phospho-beta-D-ribosyl)-ATP + diphosphate = 5-phospho-alpha-D-ribose 1-diphosphate + ATP. It functions in the pathway amino-acid biosynthesis; L-histidine biosynthesis; L-histidine from 5-phospho-alpha-D-ribose 1-diphosphate: step 1/9. Catalyzes the condensation of ATP and 5-phosphoribose 1-diphosphate to form N'-(5'-phosphoribosyl)-ATP (PR-ATP). Has a crucial role in the pathway because the rate of histidine biosynthesis seems to be controlled primarily by regulation of HisG enzymatic activity. This chain is ATP phosphoribosyltransferase, found in Clostridium novyi (strain NT).